A 488-amino-acid chain; its full sequence is Glutamyl-tRNA(Gln) amidotransferase subunit A (488 aa).

Active-site charge relay system residues include K77 and S152. Residue S176 is the Acyl-ester intermediate of the active site.

This sequence belongs to the amidase family. GatA subfamily. In terms of assembly, heterotrimer of A, B and C subunits.

The enzyme catalyses L-glutamyl-tRNA(Gln) + L-glutamine + ATP + H2O = L-glutaminyl-tRNA(Gln) + L-glutamate + ADP + phosphate + H(+). Its function is as follows. Allows the formation of correctly charged Gln-tRNA(Gln) through the transamidation of misacylated Glu-tRNA(Gln) in organisms which lack glutaminyl-tRNA synthetase. The reaction takes place in the presence of glutamine and ATP through an activated gamma-phospho-Glu-tRNA(Gln). The polypeptide is Glutamyl-tRNA(Gln) amidotransferase subunit A (Streptococcus pyogenes serotype M6 (strain ATCC BAA-946 / MGAS10394)).